The sequence spans 862 residues: Leucine--tRNA ligase (862 aa).

The 'HIGH' region motif lies at 42-52 (PYPSGKIHIGH). A 'KMSKS' region motif is present at residues 614-618 (KMSKS). Lys617 lines the ATP pocket.

This sequence belongs to the class-I aminoacyl-tRNA synthetase family.

Its subcellular location is the cytoplasm. The catalysed reaction is tRNA(Leu) + L-leucine + ATP = L-leucyl-tRNA(Leu) + AMP + diphosphate. The protein is Leucine--tRNA ligase of Syntrophus aciditrophicus (strain SB).